A 435-amino-acid chain; its full sequence is 3-ketoacyl-CoA thiolase (435 aa).

Cys98 (acyl-thioester intermediate) is an active-site residue. Residues His391 and Cys421 each act as proton acceptor in the active site.

Belongs to the thiolase-like superfamily. Thiolase family. Heterotetramer of two alpha chains (FadJ) and two beta chains (FadI).

It localises to the cytoplasm. It carries out the reaction an acyl-CoA + acetyl-CoA = a 3-oxoacyl-CoA + CoA. The protein operates within lipid metabolism; fatty acid beta-oxidation. Catalyzes the final step of fatty acid oxidation in which acetyl-CoA is released and the CoA ester of a fatty acid two carbons shorter is formed. The chain is 3-ketoacyl-CoA thiolase from Vibrio parahaemolyticus serotype O3:K6 (strain RIMD 2210633).